Consider the following 152-residue polypeptide: SsrA-binding protein (152 aa).

The segment at 122-152 (KGKKNHDKRETEAARDWQRDKARLMKGDRGD) is disordered. Over residues 128 to 152 (DKRETEAARDWQRDKARLMKGDRGD) the composition is skewed to basic and acidic residues.

Belongs to the SmpB family.

It localises to the cytoplasm. Required for rescue of stalled ribosomes mediated by trans-translation. Binds to transfer-messenger RNA (tmRNA), required for stable association of tmRNA with ribosomes. tmRNA and SmpB together mimic tRNA shape, replacing the anticodon stem-loop with SmpB. tmRNA is encoded by the ssrA gene; the 2 termini fold to resemble tRNA(Ala) and it encodes a 'tag peptide', a short internal open reading frame. During trans-translation Ala-aminoacylated tmRNA acts like a tRNA, entering the A-site of stalled ribosomes, displacing the stalled mRNA. The ribosome then switches to translate the ORF on the tmRNA; the nascent peptide is terminated with the 'tag peptide' encoded by the tmRNA and targeted for degradation. The ribosome is freed to recommence translation, which seems to be the essential function of trans-translation. This is SsrA-binding protein from Caulobacter sp. (strain K31).